A 229-amino-acid chain; its full sequence is ATP-dependent dethiobiotin synthetase BioD (229 aa).

Position 12–17 (12–17 (GVGKTV)) interacts with ATP. Mg(2+) is bound at residue Thr-16. Lys-37 is a catalytic residue. Substrate is bound at residue Thr-41. ATP contacts are provided by residues Asp-53, 112–115 (EGAG), and 201–203 (PAG). Positions 53 and 112 each coordinate Mg(2+).

This sequence belongs to the dethiobiotin synthetase family. As to quaternary structure, homodimer. It depends on Mg(2+) as a cofactor.

Its subcellular location is the cytoplasm. The catalysed reaction is (7R,8S)-7,8-diammoniononanoate + CO2 + ATP = (4R,5S)-dethiobiotin + ADP + phosphate + 3 H(+). It participates in cofactor biosynthesis; biotin biosynthesis; biotin from 7,8-diaminononanoate: step 1/2. Functionally, catalyzes a mechanistically unusual reaction, the ATP-dependent insertion of CO2 between the N7 and N8 nitrogen atoms of 7,8-diaminopelargonic acid (DAPA, also called 7,8-diammoniononanoate) to form a ureido ring. The protein is ATP-dependent dethiobiotin synthetase BioD of Mycobacterium sp. (strain KMS).